A 273-amino-acid chain; its full sequence is uncharacterized protein (273 aa).

10-34 lines the NAD(+) pocket; that stretch reads VITGAATGIGQATAEVFANEGARVI. Serine 142 is a binding site for substrate. Catalysis depends on tyrosine 155, which acts as the Proton acceptor.

It belongs to the short-chain dehydrogenases/reductases (SDR) family.

This is an uncharacterized protein from Bacillus subtilis (strain 168).